Consider the following 452-residue polypeptide: Bifunctional protein GlmU (452 aa).

A pyrophosphorylase region spans residues 1–226; that stretch reads MSLTTVILAA…PMEVEGANNR (226 aa). Residues 8–11, Lys-22, Gln-73, 78–79, 100–102, Gly-137, Glu-151, Asn-166, and Asn-224 each bind UDP-N-acetyl-alpha-D-glucosamine; these read LAAG, GT, and YGD. Asp-102 provides a ligand contact to Mg(2+). Asn-224 serves as a coordination point for Mg(2+). Residues 227–247 are linker; that stretch reads IQLAGLERAYQAWQAQELMLN. The N-acetyltransferase stretch occupies residues 248–452; it reads GATLADPARI…LDGWKRPVKK (205 aa). UDP-N-acetyl-alpha-D-glucosamine-binding residues include Arg-330 and Lys-348. His-360 (proton acceptor) is an active-site residue. Residues Tyr-363 and Asn-374 each coordinate UDP-N-acetyl-alpha-D-glucosamine. Acetyl-CoA contacts are provided by residues Ala-377, 383–384, Ser-402, Ala-420, and Arg-437; that span reads NY.

The protein in the N-terminal section; belongs to the N-acetylglucosamine-1-phosphate uridyltransferase family. In the C-terminal section; belongs to the transferase hexapeptide repeat family. In terms of assembly, homotrimer. Mg(2+) serves as cofactor.

The protein localises to the cytoplasm. The catalysed reaction is alpha-D-glucosamine 1-phosphate + acetyl-CoA = N-acetyl-alpha-D-glucosamine 1-phosphate + CoA + H(+). The enzyme catalyses N-acetyl-alpha-D-glucosamine 1-phosphate + UTP + H(+) = UDP-N-acetyl-alpha-D-glucosamine + diphosphate. The protein operates within nucleotide-sugar biosynthesis; UDP-N-acetyl-alpha-D-glucosamine biosynthesis; N-acetyl-alpha-D-glucosamine 1-phosphate from alpha-D-glucosamine 6-phosphate (route II): step 2/2. It participates in nucleotide-sugar biosynthesis; UDP-N-acetyl-alpha-D-glucosamine biosynthesis; UDP-N-acetyl-alpha-D-glucosamine from N-acetyl-alpha-D-glucosamine 1-phosphate: step 1/1. Its pathway is bacterial outer membrane biogenesis; LPS lipid A biosynthesis. Its function is as follows. Catalyzes the last two sequential reactions in the de novo biosynthetic pathway for UDP-N-acetylglucosamine (UDP-GlcNAc). The C-terminal domain catalyzes the transfer of acetyl group from acetyl coenzyme A to glucosamine-1-phosphate (GlcN-1-P) to produce N-acetylglucosamine-1-phosphate (GlcNAc-1-P), which is converted into UDP-GlcNAc by the transfer of uridine 5-monophosphate (from uridine 5-triphosphate), a reaction catalyzed by the N-terminal domain. The sequence is that of Bifunctional protein GlmU from Pseudoalteromonas translucida (strain TAC 125).